A 709-amino-acid polypeptide reads, in one-letter code: ATP-dependent RNA helicase dbp7 (709 aa).

A disordered region spans residues 13 to 90; that stretch reads DNAQSRKPEA…KPAHELKGNK (78 aa). Basic and acidic residues predominate over residues 16–34; it reads QSRKPEALKSSRRWTDRAR. The segment covering 44-65 has biased composition (polar residues); that stretch reads NESSKSTVKRNSGTNGASTDYK. Basic and acidic residues predominate over residues 66 to 90; that stretch reads NSQKEKVINPVFDPRKPAHELKGNK. The Q motif motif lies at 138-167; the sequence is TNFAGVQLDTQLADHLNNKMNISAPTAIQS. Residues 172-366 enclose the Helicase ATP-binding domain; the sequence is ALLNTDDKDA…DSALKDALYL (195 aa). 185-192 is a binding site for ATP; that stretch reads AQTGSGKT. The DEAD box signature appears at 301–304; the sequence is DEGD. The Helicase C-terminal domain maps to 404–580; the sequence is LLRSHVRSYK…EQPNGPSGLL (177 aa). Residues 662 to 690 form a disordered region; sequence GKISGANSSKPRKQGGSVDKGKSKSSKDI.

It belongs to the DEAD box helicase family. DDX31/DBP7 subfamily.

It is found in the nucleus. It localises to the nucleolus. It carries out the reaction ATP + H2O = ADP + phosphate + H(+). In terms of biological role, ATP-binding RNA helicase involved in the biogenesis of 60S ribosomal subunits and is required for the normal formation of 25S and 5.8S rRNAs. This chain is ATP-dependent RNA helicase dbp7 (dbp7), found in Schizosaccharomyces pombe (strain 972 / ATCC 24843) (Fission yeast).